Consider the following 472-residue polypeptide: Acetyl-CoA decarbonylase/synthase complex subunit beta 2 (472 aa).

C189, C192, C278, and C280 together coordinate [Ni-Fe-S] cluster.

This sequence belongs to the CdhC family. Monomer. The ACDS complex is made up of alpha, epsilon, beta, gamma and delta chains with a probable stoichiometry of (alpha(2)epsilon(2))(4)-beta(8)-(gamma(1)delta(1))(8) (Potential). The cofactor is [Ni-Fe-S] cluster.

The enzyme catalyses Co(I)-[corrinoid Fe-S protein] + acetyl-CoA + H(+) = methyl-Co(III)-[corrinoid Fe-S protein] + CO + CoA. It participates in one-carbon metabolism; methanogenesis from acetate. Its function is as follows. Part of a complex that catalyzes the reversible cleavage of acetyl-CoA, allowing growth on acetate as sole source of carbon and energy. The alpha-epsilon complex generates CO from CO(2), while the beta subunit (this protein) combines the CO with CoA and a methyl group to form acetyl-CoA. The methyl group, which is incorporated into acetyl-CoA, is transferred to the beta subunit by a corrinoid iron-sulfur protein (the gamma-delta complex). The chain is Acetyl-CoA decarbonylase/synthase complex subunit beta 2 (cdhC2) from Methanosarcina thermophila.